Reading from the N-terminus, the 119-residue chain is V-type proton ATPase subunit F (119 aa).

Belongs to the V-ATPase F subunit family. As to quaternary structure, V-ATPase is a heteromultimeric enzyme made up of two complexes: the ATP-hydrolytic V1 complex and the proton translocation V0 complex. The V1 complex consists of three catalytic AB heterodimers that form a heterohexamer, three peripheral stalks each consisting of EG heterodimers, one central rotor including subunits D and F, and the regulatory subunits C and H. The proton translocation complex V0 consists of the proton transport subunit a, a ring of proteolipid subunits c9c'', rotary subunit d, subunits e and f, and the accessory subunits ATP6AP1/Ac45 and ATP6AP2/PRR. Expressed in brain (at protein level).

It localises to the cytoplasmic vesicle. Its subcellular location is the secretory vesicle. It is found in the synaptic vesicle membrane. The protein resides in the clathrin-coated vesicle membrane. Subunit of the V1 complex of vacuolar(H+)-ATPase (V-ATPase), a multisubunit enzyme composed of a peripheral complex (V1) that hydrolyzes ATP and a membrane integral complex (V0) that translocates protons. V-ATPase is responsible for acidifying and maintaining the pH of intracellular compartments and in some cell types, is targeted to the plasma membrane, where it is responsible for acidifying the extracellular environment. The polypeptide is V-type proton ATPase subunit F (ATP6V1F) (Bos taurus (Bovine)).